The chain runs to 230 residues: Porin OmpL (230 aa).

Residues 1–20 (MKSLNTLVILTSVISTSVFA) form the signal peptide.

It belongs to the oligogalacturonate-specific porin KdgM (TC 1.B.35) family. OmpL subfamily.

The protein localises to the cell outer membrane. Its function is as follows. Outer membrane channel protein that allows an efficient diffusion of low-molecular-weight solutes such as small sugars and tetraglycine. However, the specific substrate recognized by the OmpL channel is unknown. This is Porin OmpL (ompL) from Salmonella typhimurium (strain LT2 / SGSC1412 / ATCC 700720).